We begin with the raw amino-acid sequence, 245 residues long: tRNA (guanine-N(1)-)-methyltransferase (245 aa).

S-adenosyl-L-methionine-binding positions include glycine 111 and 131–136 (IGDYVL).

Belongs to the RNA methyltransferase TrmD family. In terms of assembly, homodimer.

The protein localises to the cytoplasm. The enzyme catalyses guanosine(37) in tRNA + S-adenosyl-L-methionine = N(1)-methylguanosine(37) in tRNA + S-adenosyl-L-homocysteine + H(+). Specifically methylates guanosine-37 in various tRNAs. The sequence is that of tRNA (guanine-N(1)-)-methyltransferase from Caldicellulosiruptor saccharolyticus (strain ATCC 43494 / DSM 8903 / Tp8T 6331).